Reading from the N-terminus, the 555-residue chain is Cinnamate beta-D-glucosyltransferase (555 aa).

His-19 functions as the Proton acceptor in the catalytic mechanism. His-19 provides a ligand contact to an anthocyanidin. Gln-344, His-359, Trp-362, Asn-363, Ser-364, and Glu-367 together coordinate UDP-alpha-D-glucose. Residue Gly-382 coordinates an anthocyanidin. UDP-alpha-D-glucose is bound by residues Asp-383 and Gln-384.

This sequence belongs to the UDP-glycosyltransferase family. As to expression, highest expression detected in fruit, with lower levels detected in flower and petiole. Barely detectable in leaf and root.

It catalyses the reaction (E)-cinnamate + UDP-alpha-D-glucose = 1-O-(trans-cinnamoyl)-beta-D-glucose + UDP. Broad spectrum multifunctional glucosyltransferase. Catalyzes the formation of cinnamic acid and p-coumaric acid glucose esters during fruit ripening. Accepted substrates range from derivatives of cinnamic acid and benzoic acid to heterocyclic and aliphatic compounds, resulting in the formation of O- and S-glucose esters and O-glucosides. May also be involved in detoxification of xenobiotics. The polypeptide is Cinnamate beta-D-glucosyltransferase (Fragaria ananassa (Strawberry)).